Reading from the N-terminus, the 280-residue chain is Lacto-N-neotetraose biosynthesis glycosyltransferase LgtE (280 aa).

Belongs to the glycosyltransferase 25 family.

It participates in glycan metabolism; lacto-N-neotetraose biosynthesis. Its pathway is bacterial outer membrane biogenesis; lipooligosaccharide biosynthesis. Functionally, adds the first galactose to the lacto-N-tetraose chain in lipooligosaccharide (LOS). This is Lacto-N-neotetraose biosynthesis glycosyltransferase LgtE (lgtE) from Neisseria meningitidis serogroup B (strain ATCC BAA-335 / MC58).